We begin with the raw amino-acid sequence, 1041 residues long: Importin-9 (1041 aa).

Ala-2 carries the N-acetylalanine modification. The Importin N-terminal domain maps to 43–119; it reads AEEQIKVLEV…RELLPNGLRE (77 aa). A disordered region spans residues 936–967; sequence QATPAEWSQDDSNDMWEDQEEEEEEEEDGLAG. The segment covering 943–964 has biased composition (acidic residues); the sequence is SQDDSNDMWEDQEEEEEEEEDG.

The protein belongs to the importin beta family. As to quaternary structure, interacts with histones H2A, H2B, H3 and H4. The binding is coupled to RanGTP cycles. Interacts with AKIRIN2; promoting association with pre-assembled proteasomes. Associates with pre-assembled proteasomes; interaction is indirect and mediated via interaction with AKIRIN2. Interacts with PPP2R1A and PPP2R1B.

The protein localises to the cytoplasm. It localises to the nucleus. Its function is as follows. Nuclear transport receptor that mediates nuclear import of proteins, such as histones, proteasome and actin. Serves as receptor for nuclear localization signals (NLS) in cargo substrates. Is thought to mediate docking of the importin/substrate complex to the nuclear pore complex (NPC) through binding to nucleoporin and the complex is subsequently translocated through the pore by an energy requiring, Ran-dependent mechanism. At the nucleoplasmic side of the NPC, Ran binds to the importin, the importin/substrate complex dissociates and importin is re-exported from the nucleus to the cytoplasm where GTP hydrolysis releases Ran. The directionality of nuclear import is thought to be conferred by an asymmetric distribution of the GTP- and GDP-bound forms of Ran between the cytoplasm and nucleus. Mediates the import of pre-assembled proteasomes into the nucleus; AKIRIN2 acts as a molecular bridge between IPO9 and the proteasome complex. Mediates the nuclear import of histones H2A, H2B, H4 and H4. In addition to nuclear import, also acts as a chaperone for histones by preventing inappropriate non-nucleosomal interactions. Mediates the nuclear import of actin. The polypeptide is Importin-9 (Homo sapiens (Human)).